Consider the following 486-residue polypeptide: Glycogen synthase (486 aa).

Position 15 (Lys-15) interacts with ADP-alpha-D-glucose.

It belongs to the glycosyltransferase 1 family. Bacterial/plant glycogen synthase subfamily.

The catalysed reaction is [(1-&gt;4)-alpha-D-glucosyl](n) + ADP-alpha-D-glucose = [(1-&gt;4)-alpha-D-glucosyl](n+1) + ADP + H(+). The protein operates within glycan biosynthesis; glycogen biosynthesis. Its function is as follows. Synthesizes alpha-1,4-glucan chains using ADP-glucose. This chain is Glycogen synthase, found in Pseudothermotoga lettingae (strain ATCC BAA-301 / DSM 14385 / NBRC 107922 / TMO) (Thermotoga lettingae).